A 413-amino-acid polypeptide reads, in one-letter code: Argininosuccinate synthase (413 aa).

8 to 16 lines the ATP pocket; it reads AYSGGLDTS. Position 87 (Tyr-87) interacts with L-citrulline. Position 117 (Gly-117) interacts with ATP. Thr-119, Asn-123, and Asp-124 together coordinate L-aspartate. Asn-123 is a binding site for L-citrulline. Residues Arg-127, Ser-175, Glu-259, and Tyr-271 each coordinate L-citrulline.

The protein belongs to the argininosuccinate synthase family. Type 1 subfamily. As to quaternary structure, homotetramer.

Its subcellular location is the cytoplasm. The catalysed reaction is L-citrulline + L-aspartate + ATP = 2-(N(omega)-L-arginino)succinate + AMP + diphosphate + H(+). The protein operates within amino-acid biosynthesis; L-arginine biosynthesis; L-arginine from L-ornithine and carbamoyl phosphate: step 2/3. This is Argininosuccinate synthase from Micrococcus luteus (strain ATCC 4698 / DSM 20030 / JCM 1464 / CCM 169 / CCUG 5858 / IAM 1056 / NBRC 3333 / NCIMB 9278 / NCTC 2665 / VKM Ac-2230) (Micrococcus lysodeikticus).